We begin with the raw amino-acid sequence, 437 residues long: UDP-N-acetylmuramate--L-alanine ligase (437 aa).

Residue 114–120 (GTHGKTS) coordinates ATP.

The protein belongs to the MurCDEF family.

The protein resides in the cytoplasm. It catalyses the reaction UDP-N-acetyl-alpha-D-muramate + L-alanine + ATP = UDP-N-acetyl-alpha-D-muramoyl-L-alanine + ADP + phosphate + H(+). The protein operates within cell wall biogenesis; peptidoglycan biosynthesis. In terms of biological role, cell wall formation. This chain is UDP-N-acetylmuramate--L-alanine ligase, found in Lactobacillus johnsonii (strain CNCM I-12250 / La1 / NCC 533).